The sequence spans 302 residues: Sulfate adenylyltransferase subunit 2 (302 aa).

Belongs to the PAPS reductase family. CysD subfamily. Heterodimer composed of CysD, the smaller subunit, and CysN.

The catalysed reaction is sulfate + ATP + H(+) = adenosine 5'-phosphosulfate + diphosphate. It functions in the pathway sulfur metabolism; hydrogen sulfide biosynthesis; sulfite from sulfate: step 1/3. Functionally, with CysN forms the ATP sulfurylase (ATPS) that catalyzes the adenylation of sulfate producing adenosine 5'-phosphosulfate (APS) and diphosphate, the first enzymatic step in sulfur assimilation pathway. APS synthesis involves the formation of a high-energy phosphoric-sulfuric acid anhydride bond driven by GTP hydrolysis by CysN coupled to ATP hydrolysis by CysD. The sequence is that of Sulfate adenylyltransferase subunit 2 from Salmonella agona (strain SL483).